Here is a 94-residue protein sequence, read N- to C-terminus: Large ribosomal subunit protein bL25 (94 aa).

Belongs to the bacterial ribosomal protein bL25 family. In terms of assembly, part of the 50S ribosomal subunit; part of the 5S rRNA/L5/L18/L25 subcomplex. Contacts the 5S rRNA. Binds to the 5S rRNA independently of L5 and L18.

In terms of biological role, this is one of the proteins that binds to the 5S RNA in the ribosome where it forms part of the central protuberance. This chain is Large ribosomal subunit protein bL25, found in Photorhabdus laumondii subsp. laumondii (strain DSM 15139 / CIP 105565 / TT01) (Photorhabdus luminescens subsp. laumondii).